Consider the following 554-residue polypeptide: (+)-delta-cadinene synthase isozyme XC14 (554 aa).

The segment covering 1 to 16 has biased composition (low complexity); it reads MASQVSQMPSSSPLSS. The interval 1–23 is disordered; sequence MASQVSQMPSSSPLSSNKDEMRP. Mg(2+)-binding residues include Asp-307, Asp-311, and Asp-451. The short motif at 307–311 is the DDXXD motif element; the sequence is DDTYD.

This sequence belongs to the terpene synthase family. The cofactor is Mg(2+).

It catalyses the reaction (2E,6E)-farnesyl diphosphate = (1S,8aR)-delta-cadinene + diphosphate. The protein operates within secondary metabolite biosynthesis; terpenoid biosynthesis. In terms of biological role, responsible for the cyclization of trans,trans-farnesyl diphosphate (FPP) to (+)-delta cadinene. The sequence is that of (+)-delta-cadinene synthase isozyme XC14 from Gossypium arboreum (Tree cotton).